We begin with the raw amino-acid sequence, 549 residues long: Glucoamylase, intracellular sporulation-specific (549 aa).

A substrate-binding site is contributed by Trp-198. Residue Asp-261 is the Proton acceptor of the active site. The active-site Proton donor is the Glu-264.

It belongs to the glycosyl hydrolase 15 family.

It carries out the reaction Hydrolysis of terminal (1-&gt;4)-linked alpha-D-glucose residues successively from non-reducing ends of the chains with release of beta-D-glucose.. The polypeptide is Glucoamylase, intracellular sporulation-specific (SGA1) (Saccharomyces cerevisiae (strain ATCC 204508 / S288c) (Baker's yeast)).